The sequence spans 927 residues: Isoleucine--tRNA ligase (927 aa).

The 'HIGH' region motif lies at 57–67 (PFANGNIHMGH). Position 553 (Glu-553) interacts with L-isoleucyl-5'-AMP. Positions 594-598 (KMSKS) match the 'KMSKS' region motif. Lys-597 serves as a coordination point for ATP. Zn(2+) is bound by residues Cys-886, Cys-889, Cys-906, and Cys-909.

Belongs to the class-I aminoacyl-tRNA synthetase family. IleS type 1 subfamily. In terms of assembly, monomer. Zn(2+) serves as cofactor.

The protein localises to the cytoplasm. The catalysed reaction is tRNA(Ile) + L-isoleucine + ATP = L-isoleucyl-tRNA(Ile) + AMP + diphosphate. Its function is as follows. Catalyzes the attachment of isoleucine to tRNA(Ile). As IleRS can inadvertently accommodate and process structurally similar amino acids such as valine, to avoid such errors it has two additional distinct tRNA(Ile)-dependent editing activities. One activity is designated as 'pretransfer' editing and involves the hydrolysis of activated Val-AMP. The other activity is designated 'posttransfer' editing and involves deacylation of mischarged Val-tRNA(Ile). This Lactobacillus acidophilus (strain ATCC 700396 / NCK56 / N2 / NCFM) protein is Isoleucine--tRNA ligase.